The primary structure comprises 235 residues: Orotidine 5'-phosphate decarboxylase (235 aa).

Substrate contacts are provided by residues Asp12, Lys34, 61–70 (DMKLLDIDNT), Thr116, Arg177, Gln186, and Arg207. Lys63 (proton donor) is an active-site residue.

The protein belongs to the OMP decarboxylase family. Type 1 subfamily. Homodimer.

The enzyme catalyses orotidine 5'-phosphate + H(+) = UMP + CO2. It participates in pyrimidine metabolism; UMP biosynthesis via de novo pathway; UMP from orotate: step 2/2. In terms of biological role, catalyzes the decarboxylation of orotidine 5'-monophosphate (OMP) to uridine 5'-monophosphate (UMP). The polypeptide is Orotidine 5'-phosphate decarboxylase (Agrobacterium fabrum (strain C58 / ATCC 33970) (Agrobacterium tumefaciens (strain C58))).